An 88-amino-acid chain; its full sequence is Small ribosomal subunit protein bS20 (88 aa).

This sequence belongs to the bacterial ribosomal protein bS20 family.

Functionally, binds directly to 16S ribosomal RNA. This Bradyrhizobium sp. (strain BTAi1 / ATCC BAA-1182) protein is Small ribosomal subunit protein bS20.